Here is a 153-residue protein sequence, read N- to C-terminus: Putative pre-16S rRNA nuclease (153 aa).

It belongs to the YqgF nuclease family.

It is found in the cytoplasm. In terms of biological role, could be a nuclease involved in processing of the 5'-end of pre-16S rRNA. The polypeptide is Putative pre-16S rRNA nuclease (Prochlorococcus marinus (strain SARG / CCMP1375 / SS120)).